We begin with the raw amino-acid sequence, 411 residues long: Diaminobutyrate--2-oxoglutarate transaminase (411 aa).

K262 is modified (N6-(pyridoxal phosphate)lysine).

Belongs to the class-III pyridoxal-phosphate-dependent aminotransferase family. It depends on pyridoxal 5'-phosphate as a cofactor.

The enzyme catalyses L-2,4-diaminobutanoate + 2-oxoglutarate = L-aspartate 4-semialdehyde + L-glutamate. Its pathway is amine and polyamine biosynthesis; ectoine biosynthesis; L-ectoine from L-aspartate 4-semialdehyde: step 1/3. Its function is as follows. Catalyzes reversively the conversion of L-aspartate beta-semialdehyde (ASA) to L-2,4-diaminobutyrate (DABA) by transamination with L-glutamate. The protein is Diaminobutyrate--2-oxoglutarate transaminase (ectB) of Vibrio cholerae serotype O1 (strain ATCC 39315 / El Tor Inaba N16961).